Here is an 857-residue protein sequence, read N- to C-terminus: Mitogen-activated protein kinase kinase kinase dlk-1 (857 aa).

Residues 62 to 304 form the Protein kinase domain; sequence ISNLEWLGSG…FSHIRQHWEI (243 aa). ATP is bound by residues 68–76 and Lys-89; that span reads LGSGSQGAV. The Proton acceptor role is filled by Asp-173. Disordered regions lie at residues 441 to 503, 572 to 625, 733 to 775, and 818 to 857; these read EEMS…ISRN, RIAS…PSRN, NAND…MESE, and HSIK…AVRI. Residues 467-488 are compositionally biased toward low complexity; sequence SSGAQSSPFSRQSSCRSSAGQQ. Polar residues predominate over residues 609–623; that stretch reads APRSSSKLNRSSYPS. Residues 753-762 show a composition bias toward acidic residues; sequence ADVESSEDEG. Over residues 763-772 the composition is skewed to polar residues; it reads NGNNILNTSM.

Belongs to the protein kinase superfamily. STE Ser/Thr protein kinase family. MAP kinase kinase kinase subfamily. Mg(2+) serves as cofactor. In terms of processing, ubiquitinated by rpm-1. Negatively regulated by ubiquitination by fsn-1 bound rpm-1, followed by degradation.

It is found in the synapse. It carries out the reaction L-seryl-[protein] + ATP = O-phospho-L-seryl-[protein] + ADP + H(+). The enzyme catalyses L-threonyl-[protein] + ATP = O-phospho-L-threonyl-[protein] + ADP + H(+). Component of a MAP kinase pathway that functions presynaptically to regulate synaptic architecture and presynaptic differentiation. Phosphorylates and activates mkk-4. The protein is Mitogen-activated protein kinase kinase kinase dlk-1 of Caenorhabditis briggsae.